The sequence spans 397 residues: Acetate kinase (397 aa).

N7 is a binding site for Mg(2+). K14 is a binding site for ATP. Position 91 (R91) interacts with substrate. D148 (proton donor/acceptor) is an active-site residue. Residues 208–212 (HLGNG), 283–285 (DFR), and 331–335 (GLGEN) contribute to the ATP site. E383 serves as a coordination point for Mg(2+).

The protein belongs to the acetokinase family. Homodimer. Requires Mg(2+) as cofactor. The cofactor is Mn(2+).

The protein localises to the cytoplasm. The catalysed reaction is acetate + ATP = acetyl phosphate + ADP. It functions in the pathway metabolic intermediate biosynthesis; acetyl-CoA biosynthesis; acetyl-CoA from acetate: step 1/2. Catalyzes the formation of acetyl phosphate from acetate and ATP. Can also catalyze the reverse reaction. This Heliobacterium modesticaldum (strain ATCC 51547 / Ice1) protein is Acetate kinase.